The sequence spans 808 residues: MAFTFTSAHLFLPVTENHSVHVNYSIPPGNWRLWSTAKGGSNKLDIRRLRCSARRTPEPLAQGSNGGRDGVEAIQRLQTIADDKIDGGANELGIVVWDLIRDGVDAVKSMFDSMGDGDISISAYDTAWVALVKDVNGSGGPQFPSSLQWIVDNQLPDGSWGDSEVFSAYDRLLKTLACVVALKSWNIRPDKCQKGLKFFRDNISKLEKENVEASAQMLSGFEVVFLSLIEVARRLDIQIPLHSPVFEDLIARRNLKFAKIPLDLMHNVPTSLLNSLEGMTGVELDWEKLLKLQSQDGSFITSPSSTAFALMQTNDTKCLGYLKFVVQKFNGGAPGQYPVEIFERIWVVDRLQRLGISRYFQLEIKECCLDYAFKHWTQYGSSWARNTPVYDLDDTCMAFRILRLHGYDVSAEAFRHFEKNGVFFCFGWETTQSVTVNFNLYRATQVAFPGENILKEAKQFSFNFLMKKQAAREFQDKWVILKDFPGELKYALEFPWYASLPRVETRFYVEQYGGDNDVWIGKTLYRMPYINNNVYLELAKLDFNNCQALHRKEWETMQKWFMESKLDEFGVSSKTLLESYFLAAASIFEPERSTERLAWAKTAFLMETIGSYFDDEMNSKDLRKAFVQEFKNIYERRMEAKGTKWNLIIILLTTLNHLTEVCGRDINSYLCHSWEKWMMMWEPEGDRYKGAAELLSNSINLSSGRLFSNDTLSHPNYEKLVTLSNKLCHQLGNSRRGNHNEDSDIKDTKIEIAMQELVQLVHQNSSDDISMDLKQTFFAVVRSFYYAAHCDRGTINSHIVKVLFESVV.

Residues 1–50 constitute a chloroplast transit peptide; it reads MAFTFTSAHLFLPVTENHSVHVNYSIPPGNWRLWSTAKGGSNKLDIRRLR. A coiled-coil region spans residues 190-219; the sequence is DKCQKGLKFFRDNISKLEKENVEASAQMLS. K256 is a binding site for substrate. Mg(2+) is bound by residues D391 and D393. The DXDD motif signature appears at 391 to 394; that stretch reads DLDD. A substrate-binding site is contributed by K477.

It belongs to the terpene synthase family. Requires Mg(2+) as cofactor. Expressed in stems, leaves and trichomes. Not detected in roots and seeds. Higher expression in young leaves than in fully expanded leaves.

The protein resides in the plastid. It localises to the chloroplast. The catalysed reaction is (2E,6E,10E)-geranylgeranyl diphosphate + H2O = 8-hydroxycopalyl diphosphate. Its pathway is secondary metabolite biosynthesis; terpenoid biosynthesis. Involved in the biosynthesis of oxygen-containing labdane-type diterpenes that may be implicated in direct and indirect defense mechanisms. No activity with geranyl diphosphate or farnesyl diphosphate as substrate. The sequence is that of Copal-8-ol diphosphate hydratase, chloroplastic from Cistus creticus subsp. creticus (Rock rose).